A 267-amino-acid polypeptide reads, in one-letter code: MRKKTSSNKKKQTKKTNNISLRRKLGLMYKKAILGLKIALIIFVCLFVFTKYFAGIKTYLTTNIYQTTTKLGFKLENVIIEGQQNVDEPTILKVLNANKGSPIFALKLDEIRNNLKKNKWIKEVYVSRRLPNTVYIKLFEREPIAIWQINNQLFLVDEEGYEISKNIQPFPHLLHVVGEGANIYAGTLVLELQKYPALMNKTSAAVRLGDRRWDLNLKGNISIKLPEKEFEEALKYVDALNKANKLFNQNYKVLDLRDKNKYYIEKY.

Topologically, residues 1–32 are cytoplasmic; that stretch reads MRKKTSSNKKKQTKKTNNISLRRKLGLMYKKA. The chain crosses the membrane as a helical span at residues 33–53; sequence ILGLKIALIIFVCLFVFTKYF. Over 54 to 267 the chain is Periplasmic; the sequence is AGIKTYLTTN…DKNKYYIEKY (214 aa). A POTRA domain is found at 73–141; sequence FKLENVIIEG…NTVYIKLFER (69 aa).

This sequence belongs to the FtsQ/DivIB family. FtsQ subfamily.

It localises to the cell inner membrane. In terms of biological role, essential cell division protein. This Rickettsia conorii (strain ATCC VR-613 / Malish 7) protein is Cell division protein FtsQ.